The chain runs to 1069 residues: Rab GTPase-activating protein 1 (1069 aa).

Positions 1–79 (MDDKASVGKI…DPPMDDQPGE (79 aa)) are disordered. Residues 7-22 (VGKISVSSDSVSTLNS) show a composition bias toward low complexity. Serine 42 is modified (phosphoserine). In terms of domain architecture, PID spans 142–298 (EDSVVFSKLT…IFTFSVSLEI (157 aa)). Serine 360 carries the post-translational modification Phosphoserine. The segment at 482-527 (ERERRKTTASPSVRLPQSGSQSSVIPSPPEDDEEEDNDEPLLSGSG) is disordered. The span at 489–506 (TASPSVRLPQSGSQSSVI) shows a compositional bias: polar residues. Residues 510–520 (PEDDEEEDNDE) are compositionally biased toward acidic residues. Residues 566–752 (GVPEALRGEV…HIIDLLLCEG (187 aa)) enclose the Rab-GAP TBC domain. Residues 798–1047 (KKLMELACNM…ALNEVQAAKK (250 aa)) are a coiled coil. Threonine 996 is modified (phosphothreonine).

Interacts with RAB6A and tubulin gamma.

The protein resides in the cytoplasm. The protein localises to the cytosol. It localises to the cytoskeleton. Its subcellular location is the microtubule organizing center. It is found in the centrosome. Its function is as follows. May act as a GTPase-activating protein of RAB6A. May play a role in microtubule nucleation by centrosome. May participate in a RAB6A-mediated pathway involved in the metaphase-anaphase transition. The chain is Rab GTPase-activating protein 1 (RABGAP1) from Homo sapiens (Human).